A 491-amino-acid polypeptide reads, in one-letter code: Ketol-acid reductoisomerase (NADP(+)) (491 aa).

In terms of domain architecture, KARI N-terminal Rossmann spans 15 to 208 (AQLGKCRFMG…GGHRAGVLES (194 aa)). Residues 45 to 48 (CGAQ), arginine 68, arginine 76, serine 78, and 108 to 110 (DKQ) contribute to the NADP(+) site. Histidine 132 is an active-site residue. Glycine 158 contacts NADP(+). 2 KARI C-terminal knotted domains span residues 209 to 344 (SFVA…TAPQ) and 345 to 484 (YEGK…MTDM). Residues aspartate 217, glutamate 221, glutamate 389, and glutamate 393 each contribute to the Mg(2+) site. Serine 414 contacts substrate.

This sequence belongs to the ketol-acid reductoisomerase family. Mg(2+) is required as a cofactor.

The enzyme catalyses (2R)-2,3-dihydroxy-3-methylbutanoate + NADP(+) = (2S)-2-acetolactate + NADPH + H(+). The catalysed reaction is (2R,3R)-2,3-dihydroxy-3-methylpentanoate + NADP(+) = (S)-2-ethyl-2-hydroxy-3-oxobutanoate + NADPH + H(+). Its pathway is amino-acid biosynthesis; L-isoleucine biosynthesis; L-isoleucine from 2-oxobutanoate: step 2/4. The protein operates within amino-acid biosynthesis; L-valine biosynthesis; L-valine from pyruvate: step 2/4. Involved in the biosynthesis of branched-chain amino acids (BCAA). Catalyzes an alkyl-migration followed by a ketol-acid reduction of (S)-2-acetolactate (S2AL) to yield (R)-2,3-dihydroxy-isovalerate. In the isomerase reaction, S2AL is rearranged via a Mg-dependent methyl migration to produce 3-hydroxy-3-methyl-2-ketobutyrate (HMKB). In the reductase reaction, this 2-ketoacid undergoes a metal-dependent reduction by NADPH to yield (R)-2,3-dihydroxy-isovalerate. The chain is Ketol-acid reductoisomerase (NADP(+)) from Citrobacter koseri (strain ATCC BAA-895 / CDC 4225-83 / SGSC4696).